Consider the following 385-residue polypeptide: Chorismate synthase (385 aa).

Residues 43–63 (PDLDRRRPGTSRHVTQRNEPD) are disordered. 2 residues coordinate NADP(+): Arg48 and Arg54. Residues 125-127 (RSS), 238-239 (NA), Gly278, 293-297 (KPTSS), and Arg319 contribute to the FMN site. Residues 363-372 (AQAPRTETAP) show a composition bias toward low complexity. Residues 363-385 (AQAPRTETAPATPPLDAGDDIEA) form a disordered region.

The protein belongs to the chorismate synthase family. In terms of assembly, homotetramer. FMNH2 is required as a cofactor.

It carries out the reaction 5-O-(1-carboxyvinyl)-3-phosphoshikimate = chorismate + phosphate. Its pathway is metabolic intermediate biosynthesis; chorismate biosynthesis; chorismate from D-erythrose 4-phosphate and phosphoenolpyruvate: step 7/7. In terms of biological role, catalyzes the anti-1,4-elimination of the C-3 phosphate and the C-6 proR hydrogen from 5-enolpyruvylshikimate-3-phosphate (EPSP) to yield chorismate, which is the branch point compound that serves as the starting substrate for the three terminal pathways of aromatic amino acid biosynthesis. This reaction introduces a second double bond into the aromatic ring system. This Leptothrix cholodnii (strain ATCC 51168 / LMG 8142 / SP-6) (Leptothrix discophora (strain SP-6)) protein is Chorismate synthase.